A 272-amino-acid polypeptide reads, in one-letter code: F-actin-capping protein subunit beta (272 aa).

It belongs to the F-actin-capping protein beta subunit family. In terms of assembly, component of the F-actin capping complex, composed of a heterodimer of an alpha and a beta subunit.

Its subcellular location is the cytoplasm. The protein localises to the cytoskeleton. In terms of biological role, F-actin-capping proteins bind in a Ca(2+)-independent manner to the fast growing ends of actin filaments (barbed end) thereby blocking the exchange of subunits at these ends. Unlike other capping proteins (such as gelsolin and severin), these proteins do not sever actin filaments. This Dictyostelium discoideum (Social amoeba) protein is F-actin-capping protein subunit beta (acpA).